We begin with the raw amino-acid sequence, 326 residues long: Dehydrogenase/reductase SDR family protein 7-like (326 aa).

The Cytoplasmic segment spans residues methionine 1–valine 17. A helical; Signal-anchor for type II membrane protein membrane pass occupies residues leucine 18–isoleucine 38. Over tryptophan 39–threonine 326 the chain is Peroxisomal. Leucine 57–isoleucine 81 contributes to the NAD(+) binding site. Serine 193 is a binding site for substrate. The active-site Proton acceptor is tyrosine 206.

Belongs to the short-chain dehydrogenases/reductases (SDR) family.

The protein localises to the peroxisome membrane. Functionally, putative oxidoreductase. In Drosophila melanogaster (Fruit fly), this protein is Dehydrogenase/reductase SDR family protein 7-like.